The sequence spans 775 residues: Putative late blight resistance protein homolog R1A-3 (775 aa).

A coiled-coil region spans residues 16-39; the sequence is PRMNEEIVGFEDVIENLRKKLLSE. Residues 17–237 form the NB-ARC domain; sequence RMNEEIVGFE…LSEMEKEVEC (221 aa). 50–57 lines the ATP pocket; the sequence is GMPGLGKT. The region spanning 711 to 775 is the HMA domain; sequence IKKMILQFDI…VGKLIDSGML (65 aa).

It belongs to the disease resistance NB-LRR family.

The protein localises to the cytoplasm. It is found in the membrane. In terms of biological role, confers resistance to late blight (Phytophthora infestans) races carrying the avirulence gene Avr1. Resistance proteins guard the plant against pathogens that contain an appropriate avirulence protein via an indirect interaction with this avirulence protein. That triggers a defense system including the hypersensitive response, which restricts the pathogen growth. The sequence is that of Putative late blight resistance protein homolog R1A-3 (R1A-3) from Solanum demissum (Wild potato).